We begin with the raw amino-acid sequence, 134 residues long: Ribosome-binding factor A (134 aa).

The protein belongs to the RbfA family. As to quaternary structure, monomer. Binds 30S ribosomal subunits, but not 50S ribosomal subunits or 70S ribosomes.

Its subcellular location is the cytoplasm. Functionally, one of several proteins that assist in the late maturation steps of the functional core of the 30S ribosomal subunit. Associates with free 30S ribosomal subunits (but not with 30S subunits that are part of 70S ribosomes or polysomes). Required for efficient processing of 16S rRNA. May interact with the 5'-terminal helix region of 16S rRNA. The protein is Ribosome-binding factor A of Rhizobium leguminosarum bv. trifolii (strain WSM2304).